A 295-amino-acid chain; its full sequence is 33 kDa chaperonin (295 aa).

Cystine bridges form between C237-C239 and C270-C273.

Belongs to the HSP33 family. In terms of processing, under oxidizing conditions two disulfide bonds are formed involving the reactive cysteines. Under reducing conditions zinc is bound to the reactive cysteines and the protein is inactive.

The protein localises to the cytoplasm. Redox regulated molecular chaperone. Protects both thermally unfolding and oxidatively damaged proteins from irreversible aggregation. Plays an important role in the bacterial defense system toward oxidative stress. The polypeptide is 33 kDa chaperonin (Lactiplantibacillus plantarum (strain ATCC BAA-793 / NCIMB 8826 / WCFS1) (Lactobacillus plantarum)).